A 207-amino-acid polypeptide reads, in one-letter code: Large ribosomal subunit protein uL4 (207 aa).

The segment at 49–78 (HAVKNRSAVRGGGKKPWRQKGTGRARQGSI) is disordered. The span at 60–71 (GGKKPWRQKGTG) shows a compositional bias: basic residues.

It belongs to the universal ribosomal protein uL4 family. Part of the 50S ribosomal subunit.

In terms of biological role, one of the primary rRNA binding proteins, this protein initially binds near the 5'-end of the 23S rRNA. It is important during the early stages of 50S assembly. It makes multiple contacts with different domains of the 23S rRNA in the assembled 50S subunit and ribosome. Functionally, forms part of the polypeptide exit tunnel. The polypeptide is Large ribosomal subunit protein uL4 (Ligilactobacillus salivarius (strain UCC118) (Lactobacillus salivarius)).